The following is a 456-amino-acid chain: Probable glycine dehydrogenase (decarboxylating) subunit 1 (456 aa).

It belongs to the GcvP family. N-terminal subunit subfamily. In terms of assembly, the glycine cleavage system is composed of four proteins: P, T, L and H. In this organism, the P 'protein' is a heterodimer of two subunits.

It carries out the reaction N(6)-[(R)-lipoyl]-L-lysyl-[glycine-cleavage complex H protein] + glycine + H(+) = N(6)-[(R)-S(8)-aminomethyldihydrolipoyl]-L-lysyl-[glycine-cleavage complex H protein] + CO2. Functionally, the glycine cleavage system catalyzes the degradation of glycine. The P protein binds the alpha-amino group of glycine through its pyridoxal phosphate cofactor; CO(2) is released and the remaining methylamine moiety is then transferred to the lipoamide cofactor of the H protein. In Rhizorhabdus wittichii (strain DSM 6014 / CCUG 31198 / JCM 15750 / NBRC 105917 / EY 4224 / RW1) (Sphingomonas wittichii), this protein is Probable glycine dehydrogenase (decarboxylating) subunit 1.